We begin with the raw amino-acid sequence, 165 residues long: Large ribosomal subunit protein uL5 (165 aa).

It belongs to the universal ribosomal protein uL5 family. In terms of assembly, part of the 50S ribosomal subunit; contacts the 5S rRNA and probably tRNA. Forms a bridge to the 30S subunit in the 70S ribosome.

Its function is as follows. This is one of the proteins that bind and probably mediate the attachment of the 5S RNA into the large ribosomal subunit, where it forms part of the central protuberance. In the 70S ribosome it contacts protein S13 of the 30S subunit (bridge B1b), connecting the 2 subunits; this bridge is implicated in subunit movement. May contact the P site tRNA; the 5S rRNA and some of its associated proteins might help stabilize positioning of ribosome-bound tRNAs. The chain is Large ribosomal subunit protein uL5 from Methanoregula boonei (strain DSM 21154 / JCM 14090 / 6A8).